The primary structure comprises 194 residues: MIRIDELLRAYRKGLFPMADPDDEKVYWCQPYKRAVVPLLSYMPSRDVARILRRGEFEVRIDSDFEGVIRGCAAPRKSDSQTWISPEIMDAYLTLNQLGVAHSVECWHHGELSGGLYGLSMGAAFFGESMFFRRSYASQVAFDHLVRRLKDRGYLLLDAQIMNPHLQKLGAVEIDHDEYMLQLDIALGKKIRFI.

It belongs to the L/F-transferase family.

It localises to the cytoplasm. It carries out the reaction N-terminal L-lysyl-[protein] + L-leucyl-tRNA(Leu) = N-terminal L-leucyl-L-lysyl-[protein] + tRNA(Leu) + H(+). The catalysed reaction is N-terminal L-arginyl-[protein] + L-leucyl-tRNA(Leu) = N-terminal L-leucyl-L-arginyl-[protein] + tRNA(Leu) + H(+). It catalyses the reaction L-phenylalanyl-tRNA(Phe) + an N-terminal L-alpha-aminoacyl-[protein] = an N-terminal L-phenylalanyl-L-alpha-aminoacyl-[protein] + tRNA(Phe). Functions in the N-end rule pathway of protein degradation where it conjugates Leu, Phe and, less efficiently, Met from aminoacyl-tRNAs to the N-termini of proteins containing an N-terminal arginine or lysine. The polypeptide is Leucyl/phenylalanyl-tRNA--protein transferase (Chlorobium phaeobacteroides (strain DSM 266 / SMG 266 / 2430)).